The sequence spans 180 residues: ATP synthase subunit b 2 (180 aa).

Residues 33–53 (IFWLLVTLVAIYFLLTRVALP) traverse the membrane as a helical segment.

The protein belongs to the ATPase B chain family. F-type ATPases have 2 components, F(1) - the catalytic core - and F(0) - the membrane proton channel. F(1) has five subunits: alpha(3), beta(3), gamma(1), delta(1), epsilon(1). F(0) has three main subunits: a(1), b(2) and c(10-14). The alpha and beta chains form an alternating ring which encloses part of the gamma chain. F(1) is attached to F(0) by a central stalk formed by the gamma and epsilon chains, while a peripheral stalk is formed by the delta and b chains.

It is found in the cell inner membrane. In terms of biological role, f(1)F(0) ATP synthase produces ATP from ADP in the presence of a proton or sodium gradient. F-type ATPases consist of two structural domains, F(1) containing the extramembraneous catalytic core and F(0) containing the membrane proton channel, linked together by a central stalk and a peripheral stalk. During catalysis, ATP synthesis in the catalytic domain of F(1) is coupled via a rotary mechanism of the central stalk subunits to proton translocation. Functionally, component of the F(0) channel, it forms part of the peripheral stalk, linking F(1) to F(0). The b'-subunit is a diverged and duplicated form of b found in plants and photosynthetic bacteria. The chain is ATP synthase subunit b 2 (atpF2) from Cereibacter sphaeroides (strain ATCC 17025 / ATH 2.4.3) (Rhodobacter sphaeroides).